Reading from the N-terminus, the 683-residue chain is Translation factor guf1, mitochondrial (683 aa).

The transit peptide at 1 to 43 (MRGCLQLARWLSAAPKGTAASLTRAPFVLANAPRFFTSSASHA) directs the protein to the mitochondrion. The region spanning 66-250 (ERYRNFCIVA…KIPAYGYFPV (185 aa)) is the tr-type G domain. Residues 75 to 82 (AHVDHGKS), 139 to 143 (DTPGH), and 193 to 196 (NKVD) contribute to the GTP site.

It belongs to the TRAFAC class translation factor GTPase superfamily. Classic translation factor GTPase family. LepA subfamily.

The protein localises to the mitochondrion inner membrane. It catalyses the reaction GTP + H2O = GDP + phosphate + H(+). Promotes mitochondrial protein synthesis. May act as a fidelity factor of the translation reaction, by catalyzing a one-codon backward translocation of tRNAs on improperly translocated ribosomes. Binds to mitochondrial ribosomes in a GTP-dependent manner. This Neosartorya fischeri (strain ATCC 1020 / DSM 3700 / CBS 544.65 / FGSC A1164 / JCM 1740 / NRRL 181 / WB 181) (Aspergillus fischerianus) protein is Translation factor guf1, mitochondrial (guf1).